The sequence spans 182 residues: Cytidylate kinase (182 aa).

7–15 (GPPGSGKSS) contacts ATP.

This sequence belongs to the cytidylate kinase family. Type 2 subfamily.

It is found in the cytoplasm. It carries out the reaction CMP + ATP = CDP + ADP. The enzyme catalyses dCMP + ATP = dCDP + ADP. The protein is Cytidylate kinase (cmk) of Sulfolobus acidocaldarius (strain ATCC 33909 / DSM 639 / JCM 8929 / NBRC 15157 / NCIMB 11770).